The chain runs to 354 residues: Large ribosomal subunit protein uL10 (354 aa).

Acidic residues-rich tracts occupy residues 286-296 (DEEALPEELQD) and 307-345 (AEAD…DGDG). Positions 286-354 (DEEALPEELQ…GGDALGDMFG (69 aa)) are disordered.

The protein belongs to the universal ribosomal protein uL10 family. As to quaternary structure, part of the 50S ribosomal subunit. Forms part of the ribosomal stalk which helps the ribosome interact with GTP-bound translation factors. Forms a heptameric L10(L12)2(L12)2(L12)2 complex, where L10 forms an elongated spine to which the L12 dimers bind in a sequential fashion.

Functionally, forms part of the ribosomal stalk, playing a central role in the interaction of the ribosome with GTP-bound translation factors. The chain is Large ribosomal subunit protein uL10 from Natronomonas pharaonis (strain ATCC 35678 / DSM 2160 / CIP 103997 / JCM 8858 / NBRC 14720 / NCIMB 2260 / Gabara) (Halobacterium pharaonis).